The primary structure comprises 255 residues: MATQRKHLVKDFNPYITCYICKGYLIKPTTVTECLHTFCKTCIVQHFEDSNDCPRCGNQVHETNPLEMLRLDNTLEEIIFKLVPGLREQLERESEFWKKNKPQENGQDDMSKVDKPKVDEEGDENQDDKDYHRSDPQIAICLDCLRNNGQSGDNVVKGLMKKFIRCSTRVTVGTIKKFLSLKLKLPSSYELDVLCNGEIMGKDHTMEFIYMTRWRLRGENFRCLNCSASQVCSQDGPLYQSYPMVLQYRPRIDFG.

Residues 18–57 (CYICKGYLIKPTTVTECLHTFCKTCIVQHFEDSNDCPRCG) form an RING-type zinc finger. The interval 97–132 (WKKNKPQENGQDDMSKVDKPKVDEEGDENQDDKDYH) is disordered. Over residues 109 to 119 (DMSKVDKPKVD) the composition is skewed to basic and acidic residues.

In terms of assembly, component of a PRC1-like complex that contains PCGF5, RNF2 and UBE2D3. Interacts with RNF2; the interaction is direct. Interacts with CBX6, CBX7 and CBX8. Interacts with AUTS2; the interaction is direct. Identified in a complex that contains AUTS2, PCGF5, CSNK2B and RNF2.

The protein localises to the nucleus. Its subcellular location is the nucleoplasm. Functionally, component of a Polycomb group (PcG) multiprotein PRC1-like complex, a complex class required to maintain the transcriptionally repressive state of many genes, including Hox genes, throughout development. PcG PRC1 complex acts via chromatin remodeling and modification of histones; it mediates monoubiquitination of histone H2A 'Lys-119', rendering chromatin heritably changed in its expressibility. Within the PRC1-like complex, regulates RNF2 ubiquitin ligase activity. Plays a redundant role with PCGF3 as part of a PRC1-like complex that mediates monoubiquitination of histone H2A 'Lys-119' on the X chromosome and is required for normal silencing of one copy of the X chromosome in XX females. The protein is Polycomb group RING finger protein 5 (PCGF5) of Bos taurus (Bovine).